The primary structure comprises 141 residues: MAIERTLSIIKPDAVAKNVIGQIYARFEGAGLKIVAAKLVHLSRGEAEQFYAVHKARPFFKDLVEFMISGPVMIQALEGEGAIAKNRELMGATDPKKAEKGTIRADFADSIDANAVHGSDAPETAAVEVAFFFPGMNVYSR.

Lys-11, Phe-59, Arg-87, Thr-93, Arg-104, and Asn-114 together coordinate ATP. The active-site Pros-phosphohistidine intermediate is the His-117.

The protein belongs to the NDK family. In terms of assembly, homotetramer. The cofactor is Mg(2+).

The protein localises to the cytoplasm. The enzyme catalyses a 2'-deoxyribonucleoside 5'-diphosphate + ATP = a 2'-deoxyribonucleoside 5'-triphosphate + ADP. The catalysed reaction is a ribonucleoside 5'-diphosphate + ATP = a ribonucleoside 5'-triphosphate + ADP. In terms of biological role, major role in the synthesis of nucleoside triphosphates other than ATP. The ATP gamma phosphate is transferred to the NDP beta phosphate via a ping-pong mechanism, using a phosphorylated active-site intermediate. The sequence is that of Nucleoside diphosphate kinase from Methylibium petroleiphilum (strain ATCC BAA-1232 / LMG 22953 / PM1).